A 505-amino-acid chain; its full sequence is DEAD-box ATP-dependent RNA helicase 8 (505 aa).

Residues 1-85 (MNNRGRYPPG…GQIPGGNSNG (85 aa)) are disordered. The segment covering 20-31 (PNPNYQSRSGYQ) has biased composition (polar residues). Residues 43 to 71 (NYAQNHQQQFQQAPSQPHQYQQQQQQQQQ) show a composition bias toward low complexity. The Q motif motif lies at 131-159 (NEFEDYFLKRELLMGIYEKGFERPSPIQE). The region spanning 162 to 332 (IPIALTGRDI…DRFLTNPYVI (171 aa)) is the Helicase ATP-binding domain. 175 to 182 (AKNGTGKT) contacts ATP. Thr-237 carries the post-translational modification Phosphothreonine. The DEAD box signature appears at 280–283 (DEAD). Residues 342–502 (GITQFYAFVE…QIPPHIDQAI (161 aa)) enclose the Helicase C-terminal domain.

Belongs to the DEAD box helicase family. DDX6/DHH1 subfamily.

Its subcellular location is the cytoplasm. It is found in the P-body. The enzyme catalyses ATP + H2O = ADP + phosphate + H(+). In terms of biological role, ATP-dependent RNA helicase involved in mRNA turnover, and more specifically in mRNA decapping. The polypeptide is DEAD-box ATP-dependent RNA helicase 8 (RH8) (Arabidopsis thaliana (Mouse-ear cress)).